A 292-amino-acid chain; its full sequence is MFTGSIVAIVTPMDEKGNVCRASLKKLIDYHVASGTSAIVSVGTTGESATLNHDEHADVVMMTLELANGRIPVIAGTGANATAEAISLTQRFNDSGIVGCLTVTPYYNRPSQEGLYQHFKAIAEHTDLPQILYNVPSRTGCDLLPETVGRLAKVKNIIGIKEATGNLTRVNQIKELVSDDFVLLSGDDVSALDFMQLGGHGVISVTANVAARDMAQMCKLAAEGHFAEARVINQRLMPLHNKLFVEPNPIPVKWACKELGLVATDTLRLPMTPITDSGRETVRAALKHAGLL.

Thr-45 serves as a coordination point for pyruvate. Tyr-133 serves as the catalytic Proton donor/acceptor. The active-site Schiff-base intermediate with substrate is Lys-161. Residue Ile-203 coordinates pyruvate.

It belongs to the DapA family. In terms of assembly, homotetramer; dimer of dimers.

It is found in the cytoplasm. The catalysed reaction is L-aspartate 4-semialdehyde + pyruvate = (2S,4S)-4-hydroxy-2,3,4,5-tetrahydrodipicolinate + H2O + H(+). It functions in the pathway amino-acid biosynthesis; L-lysine biosynthesis via DAP pathway; (S)-tetrahydrodipicolinate from L-aspartate: step 3/4. Catalyzes the condensation of (S)-aspartate-beta-semialdehyde [(S)-ASA] and pyruvate to 4-hydroxy-tetrahydrodipicolinate (HTPA). The sequence is that of 4-hydroxy-tetrahydrodipicolinate synthase from Shigella dysenteriae serotype 1 (strain Sd197).